The primary structure comprises 385 residues: Leucine aminopeptidase 1 (385 aa).

Residues 1–14 (MKFLTLALSATATA) form the signal peptide. Residues 15-85 (MIIVNPEQQP…YGTLHTTRVV (71 aa)) constitute a propeptide that is removed on maturation. 4 residues coordinate Zn(2+): H185, D204, E243, and D270. C319 and C323 are disulfide-bonded. Residue H352 coordinates Zn(2+).

The protein belongs to the peptidase M28 family. M28E subfamily. Monomer. Zn(2+) is required as a cofactor.

The protein localises to the secreted. In terms of biological role, extracellular aminopeptidase that allows assimilation of proteinaceous substrates. This Penicillium rubens (strain ATCC 28089 / DSM 1075 / NRRL 1951 / Wisconsin 54-1255) (Penicillium chrysogenum) protein is Leucine aminopeptidase 1 (lap1).